The following is a 393-amino-acid chain: ATP phosphoribosyltransferase regulatory subunit (393 aa).

The protein belongs to the class-II aminoacyl-tRNA synthetase family. HisZ subfamily. As to quaternary structure, heteromultimer composed of HisG and HisZ subunits.

Its subcellular location is the cytoplasm. It functions in the pathway amino-acid biosynthesis; L-histidine biosynthesis; L-histidine from 5-phospho-alpha-D-ribose 1-diphosphate: step 1/9. Its function is as follows. Required for the first step of histidine biosynthesis. May allow the feedback regulation of ATP phosphoribosyltransferase activity by histidine. The chain is ATP phosphoribosyltransferase regulatory subunit from Marinobacter nauticus (strain ATCC 700491 / DSM 11845 / VT8) (Marinobacter aquaeolei).